The primary structure comprises 203 residues: Outer-membrane lipoprotein LolB (203 aa).

A signal peptide spans 1–18; sequence MYRLLCLLALLTAAGLMG. A lipid anchor (N-palmitoyl cysteine) is attached at C19. C19 is lipidated: S-diacylglycerol cysteine.

The protein belongs to the LolB family. As to quaternary structure, monomer.

The protein resides in the cell outer membrane. In terms of biological role, plays a critical role in the incorporation of lipoproteins in the outer membrane after they are released by the LolA protein. This Cellvibrio japonicus (strain Ueda107) (Pseudomonas fluorescens subsp. cellulosa) protein is Outer-membrane lipoprotein LolB.